The sequence spans 274 residues: Proteasome subunit beta (274 aa).

Positions M1–G52 are cleaved as a propeptide — removed in mature form; by autocatalysis. T53 acts as the Nucleophile in catalysis.

Belongs to the peptidase T1B family. In terms of assembly, the 20S proteasome core is composed of 14 alpha and 14 beta subunits that assemble into four stacked heptameric rings, resulting in a barrel-shaped structure. The two inner rings, each composed of seven catalytic beta subunits, are sandwiched by two outer rings, each composed of seven alpha subunits. The catalytic chamber with the active sites is on the inside of the barrel. Has a gated structure, the ends of the cylinder being occluded by the N-termini of the alpha-subunits. Is capped by the proteasome-associated ATPase, ARC.

The protein localises to the cytoplasm. It catalyses the reaction Cleavage of peptide bonds with very broad specificity.. It participates in protein degradation; proteasomal Pup-dependent pathway. With respect to regulation, the formation of the proteasomal ATPase ARC-20S proteasome complex, likely via the docking of the C-termini of ARC into the intersubunit pockets in the alpha-rings, may trigger opening of the gate for substrate entry. Interconversion between the open-gate and close-gate conformations leads to a dynamic regulation of the 20S proteasome proteolysis activity. Its function is as follows. Component of the proteasome core, a large protease complex with broad specificity involved in protein degradation. The protein is Proteasome subunit beta of Parafrankia sp. (strain EAN1pec).